Here is a 390-residue protein sequence, read N- to C-terminus: Lissencephaly-1 homolog (390 aa).

Residues 7-39 (QREEINRAVAEYLQNNGYSEAFNMLLKEASLSE) form the LisH domain. Residues 54–80 (TTVLRLQRKVNDLEAKLLESQQEINHG) are a coiled coil. WD repeat units follow at residues 104 to 145 (GHRL…KTLK), 146 to 185 (GHTD…DCLK), 189 to 228 (GHEH…CVFT), 231 to 270 (GHND…RNWY), 272 to 313 (EIMS…VIFT), 316 to 355 (AHEN…CMKA), and 358 to 390 (AHEH…WECR).

Belongs to the WD repeat LIS1/nudF family.

The protein resides in the cytoplasm. Its subcellular location is the cytoskeleton. The protein localises to the microtubule organizing center. It is found in the centrosome. Its function is as follows. Positively regulates the activity of the minus-end directed microtubule motor protein dynein. May enhance dynein-mediated microtubule sliding by targeting dynein to the microtubule plus end. Required for several dynein- and microtubule-dependent processes. This chain is Lissencephaly-1 homolog, found in Caenorhabditis briggsae.